The sequence spans 586 residues: Dual specificity tyrosine-phosphorylation-regulated kinase 3 (586 aa).

A compositionally biased stretch (basic and acidic residues) spans 1–13; that stretch reads MGGAARDRGRKDA. The tract at residues 1 to 187 is disordered; the sequence is MGGAARDRGR…QGVIGGPNNG (187 aa). Residues 208–521 form the Protein kinase domain; sequence YEVLKIIGKG…PAQALRHPWI (314 aa). Residues 214–222, Lys237, and 287–290 contribute to the ATP site; these read IGKGSFGQV and FELL. Asp334 functions as the Proton acceptor in the catalytic mechanism. Tyr368 bears the Phosphotyrosine mark. The short motif at 467 to 480 is the Nuclear localization signal element; it reads RSRRGKKRGPPGSK.

This sequence belongs to the protein kinase superfamily. CMGC Ser/Thr protein kinase family. MNB/DYRK subfamily. Interacts with SIRT1. Mg(2+) serves as cofactor. Post-translationally, ubiquitinated at anaphase by the anaphase-promoting complex (APC/C), leading to its degradation by the proteasome. In terms of processing, protein kinase activity is activated following autophosphorylation at Tyr-368.

It localises to the nucleus. The protein resides in the cytoplasm. Its subcellular location is the nucleus speckle. It is found in the cytoplasmic granule. The protein localises to the cytoskeleton. It localises to the microtubule organizing center. The protein resides in the centrosome. The enzyme catalyses L-seryl-[protein] + ATP = O-phospho-L-seryl-[protein] + ADP + H(+). It catalyses the reaction L-threonyl-[protein] + ATP = O-phospho-L-threonyl-[protein] + ADP + H(+). It carries out the reaction L-tyrosyl-[protein] + ATP = O-phospho-L-tyrosyl-[protein] + ADP + H(+). Its activity is regulated as follows. Protein kinase activity is activated following autophosphorylation at Tyr-368. Functionally, dual-specificity protein kinase that promotes disassembly of several types of membraneless organelles during mitosis, such as stress granules, nuclear speckles and pericentriolar material. Dual-specificity tyrosine-regulated kinases (DYRKs) autophosphorylate a critical tyrosine residue in their activation loop and phosphorylate their substrate on serine and threonine residues. Acts as a central dissolvase of membraneless organelles during the G2-to-M transition, after the nuclear-envelope breakdown: acts by mediating phosphorylation of multiple serine and threonine residues in unstructured domains of proteins, such as SRRM1 and PCM1. Does not mediate disassembly of all membraneless organelles: disassembly of P-body and nucleolus is not regulated by DYRK3. Dissolution of membraneless organelles at the onset of mitosis is also required to release mitotic regulators, such as ZNF207, from liquid-unmixed organelles where they are sequestered and keep them dissolved during mitosis. Regulates mTORC1 by mediating the dissolution of stress granules: during stressful conditions, DYRK3 partitions from the cytosol to the stress granule, together with mTORC1 components, which prevents mTORC1 signaling. When stress signals are gone, the kinase activity of DYRK3 is required for the dissolution of stress granule and mTORC1 relocation to the cytosol: acts by mediating the phosphorylation of the mTORC1 inhibitor AKT1S1, allowing full reactivation of mTORC1 signaling. Also acts as a negative regulator of EPO-dependent erythropoiesis: may place an upper limit on red cell production during stress erythropoiesis. Inhibits cell death due to cytokine withdrawal in hematopoietic progenitor cells. Promotes cell survival upon genotoxic stress through phosphorylation of SIRT1: this in turn inhibits p53/TP53 activity and apoptosis. This Mus musculus (Mouse) protein is Dual specificity tyrosine-phosphorylation-regulated kinase 3.